The following is a 406-amino-acid chain: Type II secretion system protein F (406 aa).

The Cytoplasmic portion of the chain corresponds to Met-1–Met-171. 3 residues coordinate Ca(2+): Glu-97, Glu-151, and Asp-155. A helical membrane pass occupies residues Ile-172–Val-192. At Val-193–His-223 the chain is on the periplasmic side. The chain crosses the membrane as a helical span at residues Trp-224 to Thr-244. Over Lys-245–Asn-368 the chain is Cytoplasmic. The helical transmembrane segment at Ile-369–Ile-389 threads the bilayer. Topologically, residues Val-390–Arg-406 are periplasmic.

Belongs to the GSP F family. Type II secretion system is composed of four main components: the outer membrane complex, the inner membrane complex, the cytoplasmic secretion ATPase and the periplasm-spanning pseudopilus. Homodimer. Interacts with EpsE/GspE and EpsL/GspL components.

Its subcellular location is the cell inner membrane. Its function is as follows. Component of the type II secretion system inner membrane complex required for the energy-dependent secretion of extracellular factors such as proteases and toxins from the periplasm. This chain is Type II secretion system protein F (epsF), found in Vibrio cholerae serotype O1 (strain ATCC 39315 / El Tor Inaba N16961).